Here is a 481-residue protein sequence, read N- to C-terminus: Aspartyl/glutamyl-tRNA(Asn/Gln) amidotransferase subunit B (481 aa).

Belongs to the GatB/GatE family. GatB subfamily. Heterotrimer of A, B and C subunits.

It catalyses the reaction L-glutamyl-tRNA(Gln) + L-glutamine + ATP + H2O = L-glutaminyl-tRNA(Gln) + L-glutamate + ADP + phosphate + H(+). The catalysed reaction is L-aspartyl-tRNA(Asn) + L-glutamine + ATP + H2O = L-asparaginyl-tRNA(Asn) + L-glutamate + ADP + phosphate + 2 H(+). Allows the formation of correctly charged Asn-tRNA(Asn) or Gln-tRNA(Gln) through the transamidation of misacylated Asp-tRNA(Asn) or Glu-tRNA(Gln) in organisms which lack either or both of asparaginyl-tRNA or glutaminyl-tRNA synthetases. The reaction takes place in the presence of glutamine and ATP through an activated phospho-Asp-tRNA(Asn) or phospho-Glu-tRNA(Gln). This is Aspartyl/glutamyl-tRNA(Asn/Gln) amidotransferase subunit B from Pseudomonas entomophila (strain L48).